Consider the following 520-residue polypeptide: Maturase K (520 aa).

Belongs to the intron maturase 2 family. MatK subfamily.

Its subcellular location is the plastid. It localises to the chloroplast. Functionally, usually encoded in the trnK tRNA gene intron. Probably assists in splicing its own and other chloroplast group II introns. The chain is Maturase K from Cycas taitungensis (Prince sago).